A 148-amino-acid chain; its full sequence is Large ribosomal subunit protein uL11 (148 aa).

A disordered region spans residues Glu-89 to Thr-108.

This sequence belongs to the universal ribosomal protein uL11 family. Part of the ribosomal stalk of the 50S ribosomal subunit. Interacts with L10 and the large rRNA to form the base of the stalk. L10 forms an elongated spine to which L12 dimers bind in a sequential fashion forming a multimeric L10(L12)X complex. One or more lysine residues are methylated.

In terms of biological role, forms part of the ribosomal stalk which helps the ribosome interact with GTP-bound translation factors. The polypeptide is Large ribosomal subunit protein uL11 (Anaeromyxobacter sp. (strain Fw109-5)).